Reading from the N-terminus, the 146-residue chain is Hemoglobin subunit beta (146 aa).

At Val-1 the chain carries N-acetylvaline. One can recognise a Globin domain in the interval 2 to 146 (HLTAAEKSAI…VANALAHKYH (145 aa)). His-63 is a heme b binding site. An N6-acetyllysine modification is found at Lys-82. His-92 contacts heme b. Cys-93 bears the S-nitrosocysteine mark. An N6-acetyllysine modification is found at Lys-144.

Belongs to the globin family. Heterotetramer of two alpha chains and two beta chains. Red blood cells.

Functionally, involved in oxygen transport from the lung to the various peripheral tissues. This chain is Hemoglobin subunit beta (HBB), found in Cavia porcellus (Guinea pig).